The sequence spans 267 residues: Tryptophan synthase alpha chain (267 aa).

Residues Glu47 and Asp58 each act as proton acceptor in the active site.

It belongs to the TrpA family. Tetramer of two alpha and two beta chains.

The enzyme catalyses (1S,2R)-1-C-(indol-3-yl)glycerol 3-phosphate + L-serine = D-glyceraldehyde 3-phosphate + L-tryptophan + H2O. It participates in amino-acid biosynthesis; L-tryptophan biosynthesis; L-tryptophan from chorismate: step 5/5. Its function is as follows. The alpha subunit is responsible for the aldol cleavage of indoleglycerol phosphate to indole and glyceraldehyde 3-phosphate. This chain is Tryptophan synthase alpha chain, found in Prosthecochloris aestuarii (strain DSM 271 / SK 413).